Here is a 361-residue protein sequence, read N- to C-terminus: Peptide chain release factor 1 (361 aa).

Gln237 carries the post-translational modification N5-methylglutamine. A disordered region spans residues Gln285–Ser306.

It belongs to the prokaryotic/mitochondrial release factor family. Methylated by PrmC. Methylation increases the termination efficiency of RF1.

Its subcellular location is the cytoplasm. Its function is as follows. Peptide chain release factor 1 directs the termination of translation in response to the peptide chain termination codons UAG and UAA. The polypeptide is Peptide chain release factor 1 (Alkalilimnicola ehrlichii (strain ATCC BAA-1101 / DSM 17681 / MLHE-1)).